A 32-amino-acid polypeptide reads, in one-letter code: Cytochrome b6-f complex subunit 8 (32 aa).

A helical transmembrane segment spans residues 6–26 (IVGITWAALMVVFTFSLSLVV).

It belongs to the PetN family. The 4 large subunits of the cytochrome b6-f complex are cytochrome b6, subunit IV (17 kDa polypeptide, PetD), cytochrome f and the Rieske protein, while the 4 small subunits are PetG, PetL, PetM and PetN. The complex functions as a dimer.

The protein resides in the plastid. Its subcellular location is the chloroplast thylakoid membrane. Its function is as follows. Component of the cytochrome b6-f complex, which mediates electron transfer between photosystem II (PSII) and photosystem I (PSI), cyclic electron flow around PSI, and state transitions. The sequence is that of Cytochrome b6-f complex subunit 8 from Pinus koraiensis (Korean pine).